Consider the following 286-residue polypeptide: Master replication protein (286 aa).

The 95-residue stretch at alanine 2 to phenylalanine 96 folds into the CRESS-DNA virus Rep endonuclease domain. The short motif at cysteine 9 to leucine 12 is the RCR-1 element. A divalent metal cation contacts are provided by glutamate 33 and histidine 41. The RCR-2 motif lies at histidine 41–glutamine 43. Positions lysine 50–arginine 70 match the Nuclear localization signal motif. Residue tyrosine 79 is the For DNA cleavage activity of the active site. The short motif at tyrosine 79–lysine 82 is the RCR-3 element. Aspartate 84 contributes to the a divalent metal cation binding site. Positions phenylalanine 96–aspartate 102 match the Nuclear localization signal motif. Residue glycine 180–threonine 188 participates in ATP binding.

Belongs to the nanoviridea/circoviridae replication-associated protein family. As to quaternary structure, homooligomer (Potential). Rep binds to repeated DNA motifs (iterons). Mg(2+) is required as a cofactor. Requires Mn(2+) as cofactor.

The protein localises to the host nucleus. It carries out the reaction ATP + H2O = ADP + phosphate + H(+). Functionally, essential for the replication of all genomic viral ssDNA (trans-replication). The closed circular ssDNA genome is first converted to a superhelical dsDNA. Rep binds a specific hairpin at the genome origin of replication. Introduces an endonucleolytic nick within the conserved sequence 5'-A[GT]TATTAC-3' in the intergenic region of the genome, thereby initiating the rolling circle replication (RCR). Following cleavage, binds covalently to the 5'-phosphate of DNA as a tyrosyl ester. The cleavage gives rise to a free 3'-OH that serves as a primer for the cellular DNA polymerase. The polymerase synthesizes the (+) strand DNA by rolling circle mechanism. After one round of replication, a Rep-catalyzed nucleotidyl transfer reaction releases a circular single-stranded virus genome, thereby terminating the replication. Displays origin-specific DNA cleavage, nucleotidyl transferase, ATPase and helicase activities. The sequence is that of Master replication protein (DNA-R) from Subterranean clover stunt virus (strain F) (SCSV).